A 342-amino-acid polypeptide reads, in one-letter code: Fructose-1,6-bisphosphatase class 1 (342 aa).

4 residues coordinate Mg(2+): E97, D119, L121, and D122. Substrate is bound by residues 122-125, N215, Y247, and K280; that span reads DGSS. E286 lines the Mg(2+) pocket.

This sequence belongs to the FBPase class 1 family. Homotetramer. Mg(2+) is required as a cofactor.

It localises to the cytoplasm. The catalysed reaction is beta-D-fructose 1,6-bisphosphate + H2O = beta-D-fructose 6-phosphate + phosphate. It functions in the pathway carbohydrate biosynthesis; gluconeogenesis. The polypeptide is Fructose-1,6-bisphosphatase class 1 (Leptospira borgpetersenii serovar Hardjo-bovis (strain JB197)).